The primary structure comprises 274 residues: tRNA-cytidine(32) 2-sulfurtransferase (274 aa).

Residues 40–45 carry the PP-loop motif motif; sequence SGGKDS. [4Fe-4S] cluster is bound by residues Cys115, Cys118, and Cys206.

This sequence belongs to the TtcA family. In terms of assembly, homodimer. The cofactor is Mg(2+). [4Fe-4S] cluster serves as cofactor.

The protein resides in the cytoplasm. It catalyses the reaction cytidine(32) in tRNA + S-sulfanyl-L-cysteinyl-[cysteine desulfurase] + AH2 + ATP = 2-thiocytidine(32) in tRNA + L-cysteinyl-[cysteine desulfurase] + A + AMP + diphosphate + H(+). It participates in tRNA modification. Its function is as follows. Catalyzes the ATP-dependent 2-thiolation of cytidine in position 32 of tRNA, to form 2-thiocytidine (s(2)C32). The sulfur atoms are provided by the cysteine/cysteine desulfurase (IscS) system. This Pseudomonas fluorescens (strain SBW25) protein is tRNA-cytidine(32) 2-sulfurtransferase.